The sequence spans 73 residues: MASTPSLIGLTYAGLAVLYLLVLPLLSLLYVDKRWTSGSAWEKVLMFFLVLFFFPGMVLLAPFMTFRPKPRSL.

The next 2 membrane-spanning stretches (helical) occupy residues 6-26 (SLIG…LPLL) and 44-64 (VLMF…APFM).

It belongs to the complex I NdhL subunit family. As to quaternary structure, NDH-1 can be composed of about 15 different subunits; different subcomplexes with different compositions have been identified which probably have different functions.

It localises to the cellular thylakoid membrane. It carries out the reaction a plastoquinone + NADH + (n+1) H(+)(in) = a plastoquinol + NAD(+) + n H(+)(out). The catalysed reaction is a plastoquinone + NADPH + (n+1) H(+)(in) = a plastoquinol + NADP(+) + n H(+)(out). In terms of biological role, NDH-1 shuttles electrons from an unknown electron donor, via FMN and iron-sulfur (Fe-S) centers, to quinones in the respiratory and/or the photosynthetic chain. The immediate electron acceptor for the enzyme in this species is believed to be plastoquinone. Couples the redox reaction to proton translocation, and thus conserves the redox energy in a proton gradient. Cyanobacterial NDH-1 also plays a role in inorganic carbon-concentration. The protein is NAD(P)H-quinone oxidoreductase subunit L of Synechococcus sp. (strain JA-2-3B'a(2-13)) (Cyanobacteria bacterium Yellowstone B-Prime).